The chain runs to 211 residues: Protein-methionine-sulfoxide reductase heme-binding subunit MsrQ (211 aa).

The next 4 membrane-spanning stretches (helical) occupy residues 17–37 (LAGLLPFLWLVWAINHGGLGA), 82–102 (LWCFAWATLHLTSYALLELGV), 116–136 (PYLTLGIISWVILLALAFTST), and 153–173 (FVYLVAILAPIHYLWSVKIIS).

It belongs to the MsrQ family. As to quaternary structure, heterodimer of a catalytic subunit (MsrP) and a heme-binding subunit (MsrQ). Requires FMN as cofactor. The cofactor is heme b.

It localises to the cell inner membrane. Part of the MsrPQ system that repairs oxidized periplasmic proteins containing methionine sulfoxide residues (Met-O), using respiratory chain electrons. Thus protects these proteins from oxidative-stress damage caused by reactive species of oxygen and chlorine generated by the host defense mechanisms. MsrPQ is essential for the maintenance of envelope integrity under bleach stress, rescuing a wide series of structurally unrelated periplasmic proteins from methionine oxidation, including the primary periplasmic chaperone SurA and the lipoprotein Pal. MsrQ provides electrons for reduction to the reductase catalytic subunit MsrP, using the quinone pool of the respiratory chain. This Shigella sonnei (strain Ss046) protein is Protein-methionine-sulfoxide reductase heme-binding subunit MsrQ.